Reading from the N-terminus, the 330-residue chain is Dof zinc finger protein DOF2.4 (330 aa).

The span at 14–25 (NWQQAPPSNYNH) shows a compositional bias: polar residues. Residues 14–70 (NWQQAPPSNYNHDGTGASANGGHVLRPQLQPQQQPQQQPHPNGSGGGGGGGGGSIRA) form a disordered region. Over residues 40–55 (PQLQPQQQPQQQPHPN) the composition is skewed to low complexity. A compositionally biased stretch (gly residues) spans 56–68 (GSGGGGGGGGGSI). The Dof-type zinc finger occupies 89 to 143 (LKCPRCESTNTKFCYFNNYSLTQPRHFCKTCRRYWTRGGALRNVPVGGGCRRNRR). Zn(2+) is bound by residues cysteine 91, cysteine 94, cysteine 116, and cysteine 119. 2 disordered regions span residues 133-165 (PVGG…SFSS) and 255-276 (QQSS…SANG). A compositionally biased stretch (low complexity) spans 146 to 165 (SNSNNNNNSTATSNNTSFSS). Residues 265 to 276 (EDSSNPNPSANG) are compositionally biased toward polar residues.

As to expression, specific to the vascular tissues. The PEAR proteins (e.g. DOF2.4, DOF5.1, DOF3.2, DOF1.1, DOF5.6 and DOF5.3) form a short-range concentration gradient that peaks at protophloem sieve elements (PSE).

It localises to the nucleus. Its subcellular location is the symplast. In terms of biological role, transcription factor that binds specifically to a 5'-AA[AG]G-3' consensus core sequence. Probably involved in early processes for vascular development. The PEAR proteins (e.g. DOF2.4, DOF5.1, DOF3.2, DOF1.1, DOF5.6 and DOF5.3) activate gene expression that promotes radial growth of protophloem sieve elements. Triggers the transcription of HD-ZIP III genes, especially in the central domain of vascular tissue. The polypeptide is Dof zinc finger protein DOF2.4 (Arabidopsis thaliana (Mouse-ear cress)).